Reading from the N-terminus, the 753-residue chain is Lysyl oxidase homolog 3 (753 aa).

A signal peptide spans 1-25; the sequence is MRPVSVWQWSPWGLLLCLLCSSCLG. SRCR domains follow at residues 44–145 and 169–282; these read FRLA…VICK and VRIR…VSCV. Cystine bridges form between Cys70–Cys134, Cys83–Cys144, Cys114–Cys124, Cys201–Cys271, Cys214–Cys281, and Cys248–Cys258. N-linked (GlcNAc...) asparagine glycosylation occurs at Asn111. N-linked (GlcNAc...) asparagine glycosylation occurs at Asn266. A compositionally biased stretch (low complexity) spans 290-302; the sequence is SSGQKKQQQSKPQ. The disordered stretch occupies residues 290-315; it reads SSGQKKQQQSKPQGEARVRLKGGAHP. 2 SRCR domains span residues 307–407 and 417–525; these read VRLK…VRCN and IRLS…VICS. 11 cysteine pairs are disulfide-bonded: Cys332–Cys396, Cys345–Cys406, Cys376–Cys386, Cys446–Cys511, Cys459–Cys524, Cys492–Cys502, Cys554–Cys560, Cys606–Cys654, Cys638–Cys644, Cys666–Cys676, and Cys713–Cys727. Residues Asn390 and Asn481 are each glycosylated (N-linked (GlcNAc...) asparagine). A lysyl-oxidase like region spans residues 529 to 732; it reads SDLLLHSALV…WVHNCHIGDA (204 aa). The Cu cation site is built by His607, His609, and His611. An N-linked (GlcNAc...) asparagine glycan is attached at Asn625. Residues 634 to 670 constitute a cross-link (lysine tyrosylquinone (Lys-Tyr)); the sequence is KASFCLEDTECQEDVSKRYECANFGEQGITVGCWDLY. Position 670 is a 2',4',5'-topaquinone (Tyr670).

It belongs to the lysyl oxidase family. In terms of assembly, interacts with STAT3. Cu cation serves as cofactor. It depends on lysine tyrosylquinone residue as a cofactor. The lysine tyrosylquinone cross-link (LTQ) is generated by condensation of the epsilon-amino group of a lysine with a topaquinone produced by oxidation of tyrosine. As to expression, isoform 1: Predominantly detected in the heart, placenta, lung, and small intestine. Isoform 2: Highly detected in the kidney, pancreas, spleen, and thymus, and is absent in lung. In eye, present in all layers of corneas as well as in the limbus and conjunctiva (at protein level).

It localises to the secreted. It is found in the extracellular space. Its subcellular location is the cytoplasm. The protein localises to the nucleus. It carries out the reaction L-lysyl-[protein] + O2 + H2O = (S)-2-amino-6-oxohexanoyl-[protein] + H2O2 + NH4(+). It catalyses the reaction N(6)-acetyl-L-lysyl-[protein] + O2 + H2O = acetamide + (S)-2-amino-6-oxohexanoyl-[protein] + H2O2. Its function is as follows. Protein-lysine 6-oxidase that mediates the oxidation of peptidyl lysine residues to allysine in target proteins. Catalyzes the post-translational oxidative deamination of peptidyl lysine residues in precursors of elastin and different types of collagens, a prerequisite in the formation of cross-links between collagens and elastin. Required for somite boundary formation by catalyzing oxidation of fibronectin (FN1), enhancing integrin signaling in myofibers and their adhesion to the myotendinous junction (MTJ). Acts as a regulator of inflammatory response by inhibiting differentiation of naive CD4(+) T-cells into T-helper Th17 or regulatory T-cells (Treg): acts by interacting with STAT3 in the nucleus and catalyzing both deacetylation and oxidation of lysine residues on STAT3, leading to disrupt STAT3 dimerization and inhibit STAT3 transcription activity. Oxidation of lysine residues to allysine on STAT3 preferentially takes place on lysine residues that are acetylated. Also able to catalyze deacetylation of lysine residues on STAT3. In terms of biological role, shows protein-lysine 6-oxidase activity toward elastin and different types of collagens, with the highest activity toward collagen type VIII. Functionally, shows protein-lysine 6-oxidase activity toward elastin and different types of collagens, with the highest activity toward collagen type IV. This is Lysyl oxidase homolog 3 from Homo sapiens (Human).